A 480-amino-acid chain; its full sequence is Endothelial transcription factor GATA-2 (480 aa).

Position 73 is a phosphoserine (serine 73). The residue at position 86 (arginine 86) is an Asymmetric dimethylarginine. The disordered stretch occupies residues 166–208 (SGSHLFGFPPTPPKEVSPDPSTTGAASPASSSAGGSVARGEDK). Residues 183 to 201 (PDPSTTGAASPASSSAGGS) are compositionally biased toward low complexity. Residue serine 192 is modified to Phosphoserine. 2 GATA-type zinc fingers span residues 295 to 319 (CVNCGATATPLWRRDGTGHYLCNAC) and 349 to 373 (CANCQTTTTTLWRRNANGDPVCNAC). A Glycyl lysine isopeptide (Lys-Gly) (interchain with G-Cter in SUMO2) cross-link involves residue lysine 389. The disordered stretch occupies residues 457–480 (TPIHPSSSLSFGHPHPSSMVTAMG).

Interacts with BRD3. Interacts with AR and CCAR1. Interacts with MDFIC.

Its subcellular location is the nucleus. Transcriptional activator which regulates endothelin-1 gene expression in endothelial cells. Binds to the consensus sequence 5'-AGATAG-3'. The polypeptide is Endothelial transcription factor GATA-2 (Gata2) (Mus musculus (Mouse)).